Reading from the N-terminus, the 359-residue chain is AA9 family lytic polysaccharide monooxygenase B (359 aa).

The signal sequence occupies residues 1-18; that stretch reads MQLFTSFSLLAVASFASA. 2 residues coordinate Cu(2+): H19 and H102. Disulfide bonds link C72-C190 and C113-C117. N-linked (GlcNAc...) asparagine glycosylation occurs at N150. The O2 site is built by H176 and Q185. Y187 lines the Cu(2+) pocket. The segment at 241–310 is disordered; it reads GGSPGNSAEP…STNINPTSLK (70 aa). The span at 245–254 shows a compositional bias: polar residues; that stretch reads GNSAEPQPQH. The span at 255 to 304 shows a compositional bias: low complexity; it reads TSTAVSTAKTASTSSLTTSVTITSQAPSNTANPPQSITTTTTPKPQSTNI. A glycan (N-linked (GlcNAc...) asparagine) is linked at N345.

This sequence belongs to the polysaccharide monooxygenase AA9 family. Cu(2+) serves as cofactor.

The protein localises to the secreted. It carries out the reaction [(1-&gt;4)-beta-D-glucosyl]n+m + reduced acceptor + O2 = 4-dehydro-beta-D-glucosyl-[(1-&gt;4)-beta-D-glucosyl]n-1 + [(1-&gt;4)-beta-D-glucosyl]m + acceptor + H2O.. Its function is as follows. Lytic polysaccharide monooxygenase (LPMO) that depolymerizes crystalline and amorphous polysaccharides via the oxidation of scissile alpha- or beta-(1-4)-glycosidic bonds, yielding C1 and C4 oxidation products. Catalysis by LPMOs requires the reduction of the active-site copper from Cu(II) to Cu(I) by a reducing agent and H(2)O(2) or O(2) as a cosubstrate. Active on cellulose and on xyloglucan for deconstruction of plant biomass. This is AA9 family lytic polysaccharide monooxygenase B from Geotrichum candidum (Oospora lactis).